Consider the following 275-residue polypeptide: 3-methyl-2-oxobutanoate hydroxymethyltransferase (275 aa).

Mg(2+)-binding residues include D49 and D88. Residues 49–50 (DS), D88, and K118 each bind 3-methyl-2-oxobutanoate. E120 is a Mg(2+) binding site. The Proton acceptor role is filled by E187.

Belongs to the PanB family. Homodecamer; pentamer of dimers. It depends on Mg(2+) as a cofactor.

It is found in the cytoplasm. It carries out the reaction 3-methyl-2-oxobutanoate + (6R)-5,10-methylene-5,6,7,8-tetrahydrofolate + H2O = 2-dehydropantoate + (6S)-5,6,7,8-tetrahydrofolate. The protein operates within cofactor biosynthesis; (R)-pantothenate biosynthesis; (R)-pantoate from 3-methyl-2-oxobutanoate: step 1/2. In terms of biological role, catalyzes the reversible reaction in which hydroxymethyl group from 5,10-methylenetetrahydrofolate is transferred onto alpha-ketoisovalerate to form ketopantoate. The polypeptide is 3-methyl-2-oxobutanoate hydroxymethyltransferase (Bartonella henselae (strain ATCC 49882 / DSM 28221 / CCUG 30454 / Houston 1) (Rochalimaea henselae)).